Consider the following 211-residue polypeptide: Nucleoside triphosphate pyrophosphatase (211 aa).

Catalysis depends on Asp78, which acts as the Proton acceptor.

This sequence belongs to the Maf family. A divalent metal cation serves as cofactor.

It localises to the cytoplasm. The catalysed reaction is a ribonucleoside 5'-triphosphate + H2O = a ribonucleoside 5'-phosphate + diphosphate + H(+). The enzyme catalyses a 2'-deoxyribonucleoside 5'-triphosphate + H2O = a 2'-deoxyribonucleoside 5'-phosphate + diphosphate + H(+). Functionally, nucleoside triphosphate pyrophosphatase. May have a dual role in cell division arrest and in preventing the incorporation of modified nucleotides into cellular nucleic acids. The chain is Nucleoside triphosphate pyrophosphatase from Mycolicibacterium smegmatis (strain ATCC 700084 / mc(2)155) (Mycobacterium smegmatis).